The primary structure comprises 113 residues: Large ribosomal subunit protein bL17 (113 aa).

The protein belongs to the bacterial ribosomal protein bL17 family. In terms of assembly, part of the 50S ribosomal subunit. Contacts protein L32.

The sequence is that of Large ribosomal subunit protein bL17 from Clostridium tetani (strain Massachusetts / E88).